The primary structure comprises 30 residues: V-type proton ATPase catalytic subunit A isoform 1 (30 aa).

This sequence belongs to the ATPase alpha/beta chains family. As to quaternary structure, V-ATPase is a heteromultimeric enzyme composed of a peripheral catalytic V1 complex (main components: subunits A, B, C, D, E, and F) attached to an integral membrane V0 proton pore complex (main component: the proteolipid protein).

The catalysed reaction is ATP + H2O + 4 H(+)(in) = ADP + phosphate + 5 H(+)(out). Its function is as follows. Catalytic subunit of the peripheral V1 complex of vacuolar ATPase. V-ATPase vacuolar ATPase is responsible for acidifying a variety of intracellular compartments in eukaryotic cells. This is V-type proton ATPase catalytic subunit A isoform 1 from Equisetum arvense (Field horsetail).